The following is a 207-amino-acid chain: Glycerol-3-phosphate acyltransferase (207 aa).

Helical transmembrane passes span isoleucine 2–isoleucine 22, methionine 47–alanine 67, isoleucine 72–glycine 92, phenylalanine 121–valine 141, and leucine 155–isoleucine 175.

This sequence belongs to the PlsY family. In terms of assembly, probably interacts with PlsX.

It localises to the cell membrane. It catalyses the reaction an acyl phosphate + sn-glycerol 3-phosphate = a 1-acyl-sn-glycero-3-phosphate + phosphate. It functions in the pathway lipid metabolism; phospholipid metabolism. Functionally, catalyzes the transfer of an acyl group from acyl-phosphate (acyl-PO(4)) to glycerol-3-phosphate (G3P) to form lysophosphatidic acid (LPA). This enzyme utilizes acyl-phosphate as fatty acyl donor, but not acyl-CoA or acyl-ACP. This Lacticaseibacillus casei (strain BL23) (Lactobacillus casei) protein is Glycerol-3-phosphate acyltransferase.